A 160-amino-acid chain; its full sequence is MAISTPMLVTFIVYIFGMVLIGFIAWRSTKNFDDYILGGRSLGPFVTALSAGASDMSGWLLMGLPGAIFISGISESWIAIGLTLGAWINWKLVAGRLRVHTEVNNNALTXPDYFTGRFEDHHNFHGFRTRVVKHIACILYRHDGALCGIGSRHAQRHFLH.

2 consecutive transmembrane segments (helical) span residues 6–26 (PMLV…FIAW) and 68–88 (IFIS…GAWI).

Belongs to the sodium:solute symporter (SSF) (TC 2.A.21) family.

The protein resides in the cell inner membrane. The enzyme catalyses L-proline(in) + Na(+)(in) = L-proline(out) + Na(+)(out). Its function is as follows. Catalyzes the sodium-dependent uptake of extracellular L-proline. This is Sodium/proline symporter from Klebsiella oxytoca.